We begin with the raw amino-acid sequence, 201 residues long: Small ribosomal subunit protein uS5 (201 aa).

The interval 1–27 is disordered; sequence MAGPQRRGSGAGGGERRDRKGRDGGAA. Basic and acidic residues predominate over residues 14 to 23; the sequence is GERRDRKGRD. The region spanning 34–97 is the S5 DRBM domain; that stretch reads YVERVVAINR…EEAKKHFFKV (64 aa).

The protein belongs to the universal ribosomal protein uS5 family. As to quaternary structure, part of the 30S ribosomal subunit. Contacts proteins S4 and S8.

Functionally, with S4 and S12 plays an important role in translational accuracy. Its function is as follows. Located at the back of the 30S subunit body where it stabilizes the conformation of the head with respect to the body. The polypeptide is Small ribosomal subunit protein uS5 (Streptomyces avermitilis (strain ATCC 31267 / DSM 46492 / JCM 5070 / NBRC 14893 / NCIMB 12804 / NRRL 8165 / MA-4680)).